Reading from the N-terminus, the 162-residue chain is MAGTIEVLVPGGEANPGPPLGPELGPTPVDVQAVVQEINDQTAAFDGTEVPVTVKYDDDGSFEIEVGVPPTAELIKDEAGFETGSGEPQEDFVADLSVDQVKQIAEQKHPDLLSYDLTNAAKEVVGTCTSLGVTIEGENPREFKERIDAGEYDDVFAAEAQA.

A disordered region spans residues 1–27 (MAGTIEVLVPGGEANPGPPLGPELGPT).

This sequence belongs to the universal ribosomal protein uL11 family. As to quaternary structure, part of the 50S ribosomal subunit. Forms part of the ribosomal stalk which helps the ribosome interact with GTP-bound translation factors. Forms a heptameric L10(L12)2(L12)2(L12)2 complex, where L10 forms an elongated spine to which 3 L12 dimers bind in a sequential fashion.

Functionally, forms part of the ribosomal stalk which helps the ribosome interact with GTP-bound translation factors. The protein is Large ribosomal subunit protein uL11 of Haloarcula marismortui (strain ATCC 43049 / DSM 3752 / JCM 8966 / VKM B-1809) (Halobacterium marismortui).